The sequence spans 132 residues: Small ribosomal subunit protein uS15 (132 aa).

It belongs to the universal ribosomal protein uS15 family. As to quaternary structure, part of the 30S ribosomal subunit.

The polypeptide is Small ribosomal subunit protein uS15 (Methanobrevibacter smithii (strain ATCC 35061 / DSM 861 / OCM 144 / PS)).